Here is a 523-residue protein sequence, read N- to C-terminus: NADP-specific glutamate dehydrogenase (523 aa).

The interval 26-50 (CARGRSAKRDVAAKRLRSRSPRMDA) is disordered. Residue Lys202 is part of the active site.

The protein belongs to the Glu/Leu/Phe/Val dehydrogenases family. Homo- and heterohexamer of alpha and beta subunits. Both subunits are encoded by the same gene. The N-termini of the alpha and the beta chains are blocked.

The protein localises to the plastid. Its subcellular location is the chloroplast. It carries out the reaction L-glutamate + NADP(+) + H2O = 2-oxoglutarate + NH4(+) + NADPH + H(+). This is NADP-specific glutamate dehydrogenase from Chlorella sorokiniana (Freshwater green alga).